Consider the following 152-residue polypeptide: MTETTPEVEVAVEAEVTYSESFVFERPIQTVGRRKEAVVRVRLVPGSGKFDLNGRSLEAYFPNKVHQQLIKAPLVTVDRLESYDIFALLHGGGPSGQAGALRLGIARALIVANPEDRPALKKACFLTRDPRATERKKYGLKKARKAPQYSKR.

The protein belongs to the universal ribosomal protein uS9 family.

The polypeptide is Small ribosomal subunit protein uS9 (Mycobacterium ulcerans (strain Agy99)).